The chain runs to 84 residues: UPF0248 protein Pisl_1919 (84 aa).

It belongs to the UPF0248 family.

In Pyrobaculum islandicum (strain DSM 4184 / JCM 9189 / GEO3), this protein is UPF0248 protein Pisl_1919.